The primary structure comprises 90 residues: Acylphosphatase (90 aa).

The Acylphosphatase-like domain maps to 5 to 90 (SFVVHVWGQV…PPQKGGFHTN (86 aa)). Catalysis depends on residues Arg-20 and Asn-38.

This sequence belongs to the acylphosphatase family.

The catalysed reaction is an acyl phosphate + H2O = a carboxylate + phosphate + H(+). The chain is Acylphosphatase (acyP) from Aeromonas salmonicida (strain A449).